Here is a 455-residue protein sequence, read N- to C-terminus: Bifunctional protein GlmU (455 aa).

Residues 1 to 226 (MSLDIVILAA…AMEVQGANDR (226 aa)) are pyrophosphorylase. UDP-N-acetyl-alpha-D-glucosamine-binding positions include 8-11 (LAAG), Lys-22, Gln-73, 78-79 (GT), 99-101 (YGD), Gly-136, Glu-151, Asn-166, and Asn-224. Asp-101 provides a ligand contact to Mg(2+). Asn-224 lines the Mg(2+) pocket. Positions 227–247 (KQLSELERHYQMREARRLMAA) are linker. An N-acetyltransferase region spans residues 248 to 455 (GVTLRDPARF…WKRPVKISKD (208 aa)). Positions 330 and 348 each coordinate UDP-N-acetyl-alpha-D-glucosamine. The active-site Proton acceptor is the His-360. UDP-N-acetyl-alpha-D-glucosamine-binding residues include Tyr-363 and Asn-374. Acetyl-CoA contacts are provided by residues Ala-377, 383 to 384 (NY), Ser-402, Ala-420, and Arg-437.

This sequence in the N-terminal section; belongs to the N-acetylglucosamine-1-phosphate uridyltransferase family. It in the C-terminal section; belongs to the transferase hexapeptide repeat family. As to quaternary structure, homotrimer. Mg(2+) serves as cofactor.

The protein localises to the cytoplasm. The enzyme catalyses alpha-D-glucosamine 1-phosphate + acetyl-CoA = N-acetyl-alpha-D-glucosamine 1-phosphate + CoA + H(+). It carries out the reaction N-acetyl-alpha-D-glucosamine 1-phosphate + UTP + H(+) = UDP-N-acetyl-alpha-D-glucosamine + diphosphate. It participates in nucleotide-sugar biosynthesis; UDP-N-acetyl-alpha-D-glucosamine biosynthesis; N-acetyl-alpha-D-glucosamine 1-phosphate from alpha-D-glucosamine 6-phosphate (route II): step 2/2. The protein operates within nucleotide-sugar biosynthesis; UDP-N-acetyl-alpha-D-glucosamine biosynthesis; UDP-N-acetyl-alpha-D-glucosamine from N-acetyl-alpha-D-glucosamine 1-phosphate: step 1/1. It functions in the pathway bacterial outer membrane biogenesis; LPS lipid A biosynthesis. In terms of biological role, catalyzes the last two sequential reactions in the de novo biosynthetic pathway for UDP-N-acetylglucosamine (UDP-GlcNAc). The C-terminal domain catalyzes the transfer of acetyl group from acetyl coenzyme A to glucosamine-1-phosphate (GlcN-1-P) to produce N-acetylglucosamine-1-phosphate (GlcNAc-1-P), which is converted into UDP-GlcNAc by the transfer of uridine 5-monophosphate (from uridine 5-triphosphate), a reaction catalyzed by the N-terminal domain. The protein is Bifunctional protein GlmU of Pseudomonas syringae pv. syringae (strain B728a).